The chain runs to 1009 residues: UvrABC system protein A (1009 aa).

32 to 39 is a binding site for ATP; sequence GLSGSGKS. 2 consecutive ABC transporter domains span residues 314–592 and 612–941; these read WSHG…AESQ and RDPS…KFLR. 645–652 contacts ATP; that stretch reads GVSGSGKS. A C4-type zinc finger spans residues 744–770; the sequence is CENCSGDGTIKIEMNFLPDVYVPCEVC. The disordered stretch occupies residues 956–1009; it reads KAPRKTAARKTAAAKSTTKKTATVRTTNNTATKKAAAVTKKTAPAKKTTRARKA. Low complexity predominate over residues 964-997; sequence RKTAAAKSTTKKTATVRTTNNTATKKAAAVTKKT. Over residues 998–1009 the composition is skewed to basic residues; that stretch reads APAKKTTRARKA.

The protein belongs to the ABC transporter superfamily. UvrA family. As to quaternary structure, forms a heterotetramer with UvrB during the search for lesions.

Its subcellular location is the cytoplasm. Its function is as follows. The UvrABC repair system catalyzes the recognition and processing of DNA lesions. UvrA is an ATPase and a DNA-binding protein. A damage recognition complex composed of 2 UvrA and 2 UvrB subunits scans DNA for abnormalities. When the presence of a lesion has been verified by UvrB, the UvrA molecules dissociate. The chain is UvrABC system protein A from Streptomyces avermitilis (strain ATCC 31267 / DSM 46492 / JCM 5070 / NBRC 14893 / NCIMB 12804 / NRRL 8165 / MA-4680).